The following is a 243-amino-acid chain: Type III pantothenate kinase (243 aa).

An ATP-binding site is contributed by 7–14 (DLGNSRFK). Substrate is bound by residues Tyr91 and 98–101 (GVDR). The active-site Proton acceptor is the Asp100. Thr122 is an ATP binding site. A substrate-binding site is contributed by Thr172.

Belongs to the type III pantothenate kinase family. Homodimer. NH4(+) serves as cofactor. Requires K(+) as cofactor.

It is found in the cytoplasm. The enzyme catalyses (R)-pantothenate + ATP = (R)-4'-phosphopantothenate + ADP + H(+). It functions in the pathway cofactor biosynthesis; coenzyme A biosynthesis; CoA from (R)-pantothenate: step 1/5. Catalyzes the phosphorylation of pantothenate (Pan), the first step in CoA biosynthesis. In Stenotrophomonas maltophilia (strain K279a), this protein is Type III pantothenate kinase.